Reading from the N-terminus, the 429-residue chain is Chordin-like protein 2 (429 aa).

The N-terminal stretch at 1–25 is a signal peptide; it reads MVPEVRVLSSLLGLALLWFPLDSHA. VWFC domains follow at residues 31 to 96 and 109 to 175; these read MFCL…PKCV and KSCQ…QACK. The N-linked (GlcNAc...) asparagine glycan is linked to asparagine 114. Serine 182 is modified (phosphoserine; by FAM20C). Residues 182-224 are disordered; that stretch reads SDEEDSVQSLHGVRHPQDPCSSDAGRKRGPGTPAPTGLSAPLS. Positions 250–315 constitute a VWFC 3 domain; it reads KACVHGGKTY…VAGKCCKICP (66 aa).

In terms of assembly, interacts with GDF5. May interact with BMP2, BMP4, BMP5, BMP6, BMP7 and INHBA. Post-translationally, phosphorylated by FAM20C in the extracellular medium. Highly expressed in uterus. Moderately expressed in heart, liver, prostate, testis and ovary. Weakly expressed in skeletal muscle, kidney, spleen, small intestine and colon. Expressed in the secretory epithelial cells of uterine endometrium, fallopian tubes, endocervical glands, bladder and prostate, as well as the transitional epithelium of the urinary bladder, and in bone osteoblasts (at protein level). In normal cartilage, expression was confined in a few chondrocytes in the superficial zone as well as in the middle zone. In diseased cartilage coming from osteoarthritic patients, expression was limited to the middle zone of chondrocytes. Isoform 1 and isoform 2 are expressed in fetal cerebellum and heart, while only isoform 2 is detected in fetal spleen. Isoform 2 present in plasma.

The protein resides in the secreted. It localises to the cytoplasm. May inhibit BMPs activity by blocking their interaction with their receptors. Has a negative regulator effect on the cartilage formation/regeneration from immature mesenchymal cells, by preventing or reducing the rate of matrix accumulation. Implicated in tumor angiogenesis. May play a role during myoblast and osteoblast differentiation, and maturation. The sequence is that of Chordin-like protein 2 (CHRDL2) from Homo sapiens (Human).